Here is a 227-residue protein sequence, read N- to C-terminus: Uracil-DNA glycosylase 2 (227 aa).

Asp-67 acts as the Proton acceptor in catalysis.

The protein belongs to the uracil-DNA glycosylase (UDG) superfamily. UNG family.

It is found in the cytoplasm. It catalyses the reaction Hydrolyzes single-stranded DNA or mismatched double-stranded DNA and polynucleotides, releasing free uracil.. Excises uracil residues from the DNA which can arise as a result of misincorporation of dUMP residues by DNA polymerase or due to deamination of cytosine. This Streptomyces avermitilis (strain ATCC 31267 / DSM 46492 / JCM 5070 / NBRC 14893 / NCIMB 12804 / NRRL 8165 / MA-4680) protein is Uracil-DNA glycosylase 2 (ung2).